Consider the following 374-residue polypeptide: tRNA-specific 2-thiouridylase MnmA (374 aa).

Residues 13–20 (GMSGGVDS) and Met39 contribute to the ATP site. The segment at 99-101 (NPD) is interaction with target base in tRNA. Cys104 serves as the catalytic Nucleophile. A disulfide bridge links Cys104 with Cys201. Gly128 provides a ligand contact to ATP. Residues 151–153 (KDQ) are interaction with tRNA. Cys201 acts as the Cysteine persulfide intermediate in catalysis. The interval 313–314 (RY) is interaction with tRNA.

It belongs to the MnmA/TRMU family.

Its subcellular location is the cytoplasm. The catalysed reaction is S-sulfanyl-L-cysteinyl-[protein] + uridine(34) in tRNA + AH2 + ATP = 2-thiouridine(34) in tRNA + L-cysteinyl-[protein] + A + AMP + diphosphate + H(+). Its function is as follows. Catalyzes the 2-thiolation of uridine at the wobble position (U34) of tRNA, leading to the formation of s(2)U34. This is tRNA-specific 2-thiouridylase MnmA from Streptococcus equi subsp. zooepidemicus (strain MGCS10565).